The primary structure comprises 433 residues: Ribonuclease T2-like (433 aa).

Cystine bridges form between cysteine 28-cysteine 47, cysteine 36-cysteine 95, cysteine 46-cysteine 171, and cysteine 103-cysteine 163. N-linked (GlcNAc...) asparagine glycans are attached at residues asparagine 38 and asparagine 71. Catalysis depends on residues histidine 88, glutamate 156, and histidine 160. N-linked (GlcNAc...) asparagine glycans are attached at residues asparagine 221 and asparagine 263. Cysteine 247 and cysteine 283 are disulfide-bonded.

The protein belongs to the RNase T2 family.

Its subcellular location is the vacuole lumen. It is found in the cytoplasm. The catalysed reaction is a ribonucleotidyl-ribonucleotide-RNA + H2O = a 3'-end 3'-phospho-ribonucleotide-RNA + a 5'-end dephospho-ribonucleoside-RNA + H(+). Functionally, rnase which modulates cell survival under stress conditions. Released from the vacuole to the cytoplasm during stress to promote tRNA and rRNA cleavage and to activate separately a downstream pathway that promotes cell death. Involved in cell size, vacuolar morphology and growth at high temperatures and high salt concentration. The chain is Ribonuclease T2-like (RNY1) from Candida glabrata (strain ATCC 2001 / BCRC 20586 / JCM 3761 / NBRC 0622 / NRRL Y-65 / CBS 138) (Yeast).